Consider the following 340-residue polypeptide: Ketol-acid reductoisomerase (NADP(+)) (340 aa).

Residues 1–183 form the KARI N-terminal Rossmann domain; sequence MAITVYYDKD…GGGRTGIIET (183 aa). NADP(+) contacts are provided by residues 26-29, R49, S52, S54, and 84-87; these read FGSQ and DEIQ. The active site involves H109. An NADP(+)-binding site is contributed by G135. Residues 184–329 enclose the KARI C-terminal knotted domain; sequence TFKAETETDL…RNLRAMMPWI (146 aa). Residues D192, E196, E228, and E232 each contribute to the Mg(2+) site. S253 is a binding site for substrate.

This sequence belongs to the ketol-acid reductoisomerase family. Requires Mg(2+) as cofactor.

The catalysed reaction is (2R)-2,3-dihydroxy-3-methylbutanoate + NADP(+) = (2S)-2-acetolactate + NADPH + H(+). It catalyses the reaction (2R,3R)-2,3-dihydroxy-3-methylpentanoate + NADP(+) = (S)-2-ethyl-2-hydroxy-3-oxobutanoate + NADPH + H(+). The protein operates within amino-acid biosynthesis; L-isoleucine biosynthesis; L-isoleucine from 2-oxobutanoate: step 2/4. Its pathway is amino-acid biosynthesis; L-valine biosynthesis; L-valine from pyruvate: step 2/4. In terms of biological role, involved in the biosynthesis of branched-chain amino acids (BCAA). Catalyzes an alkyl-migration followed by a ketol-acid reduction of (S)-2-acetolactate (S2AL) to yield (R)-2,3-dihydroxy-isovalerate. In the isomerase reaction, S2AL is rearranged via a Mg-dependent methyl migration to produce 3-hydroxy-3-methyl-2-ketobutyrate (HMKB). In the reductase reaction, this 2-ketoacid undergoes a metal-dependent reduction by NADPH to yield (R)-2,3-dihydroxy-isovalerate. In Campylobacter jejuni (strain RM1221), this protein is Ketol-acid reductoisomerase (NADP(+)).